The chain runs to 233 residues: Methylthioribulose-1-phosphate dehydratase (233 aa).

A substrate-binding site is contributed by cysteine 91. Zn(2+)-binding residues include histidine 108 and histidine 110. Glutamate 137 serves as the catalytic Proton donor/acceptor. A Zn(2+)-binding site is contributed by histidine 194.

This sequence belongs to the aldolase class II family. MtnB subfamily. It depends on Zn(2+) as a cofactor.

It is found in the cytoplasm. It carries out the reaction 5-(methylsulfanyl)-D-ribulose 1-phosphate = 5-methylsulfanyl-2,3-dioxopentyl phosphate + H2O. The protein operates within amino-acid biosynthesis; L-methionine biosynthesis via salvage pathway; L-methionine from S-methyl-5-thio-alpha-D-ribose 1-phosphate: step 2/6. Functionally, catalyzes the dehydration of methylthioribulose-1-phosphate (MTRu-1-P) into 2,3-diketo-5-methylthiopentyl-1-phosphate (DK-MTP-1-P). This Phaeosphaeria nodorum (strain SN15 / ATCC MYA-4574 / FGSC 10173) (Glume blotch fungus) protein is Methylthioribulose-1-phosphate dehydratase.